Consider the following 262-residue polypeptide: Acetylglutamate kinase (262 aa).

Substrate-binding positions include G46 to G47, R68, and N160.

The protein belongs to the acetylglutamate kinase family. ArgB subfamily.

It localises to the cytoplasm. The catalysed reaction is N-acetyl-L-glutamate + ATP = N-acetyl-L-glutamyl 5-phosphate + ADP. Its pathway is amino-acid biosynthesis; L-arginine biosynthesis; N(2)-acetyl-L-ornithine from L-glutamate: step 2/4. Functionally, catalyzes the ATP-dependent phosphorylation of N-acetyl-L-glutamate. This is Acetylglutamate kinase from Shewanella amazonensis (strain ATCC BAA-1098 / SB2B).